We begin with the raw amino-acid sequence, 441 residues long: Protein C-ets-1 (441 aa).

Lys8 and Lys15 each carry N6-acetyllysine; alternate. Residues Lys8 and Lys15 each participate in a glycyl lysine isopeptide (Lys-Gly) (interchain with G-Cter in SUMO2); alternate cross-link. A Glycyl lysine isopeptide (Lys-Gly) (interchain with G-Cter in SUMO); alternate cross-link involves residue Lys15. A Phosphothreonine; by MAPK modification is found at Thr38. One can recognise a PNT domain in the interval 51–136; it reads ATFSGFTKEQ…EHLEILQKED (86 aa). Positions 130–243 are activation domain; required for transcription activation; sequence EILQKEDVKP…DNMCMGRASR (114 aa). Residue Lys138 forms a Glycyl lysine isopeptide (Lys-Gly) (interchain with G-Cter in SUMO2) linkage. Tyr223 carries the phosphotyrosine modification. Residue Lys227 forms a Glycyl lysine isopeptide (Lys-Gly) (interchain with G-Cter in SUMO) linkage. Residues Ser251 and Ser254 each carry the phosphoserine modification. At Thr265 the chain carries Phosphothreonine. Residues Ser267, Ser270, Ser282, and Ser285 each carry the phosphoserine modification. A helix HI-1 region spans residues 304 to 312; sequence FKDYVRDRA. The residue at position 305 (Lys305) is an N6-acetyllysine. Residues 323 to 330 are helix HI-2; that stretch reads AAALAGYT. Residues 335–415 constitute a DNA-binding region (ETS); it reads IQLWQFLLEL…AGKRYVYRFV (81 aa). The helix H4 stretch occupies residues 418-422; the sequence is LQSLL. The segment at 426 to 432 is helix H5; the sequence is PEELHAM.

It belongs to the ETS family. As to quaternary structure, binds DNA as a homodimer; homodimerization is required for transcription activation. Interacts with MAF and MAFB. Interacts with PAX5; the interaction alters DNA-binding properties. Interacts with DAXX. Interacts with UBE2I. Interacts with SP100; the interaction is direct and modulates ETS1 transcriptional activity. In terms of processing, sumoylated on Lys-15 and Lys-227, preferentially with SUMO2; which inhibits transcriptional activity. Post-translationally, ubiquitinated; which induces proteasomal degradation. Phosphorylation at Ser-251, Ser-282 and Ser-285 by CaMK2/CaMKII in response to calcium signaling decreases affinity for DNA: an increasing number of phosphoserines causes DNA-binding to become progressively weaker.

The protein localises to the nucleus. It is found in the cytoplasm. Autoinhibited by a module composed of four alpha helices (HI-1, HI-2, H4, and H5) that flank the DNA-binding ETS domain, reducing the affinity for DNA. Phosphorylation by CaMK2/CaMKII in response to calcium signaling decreases affinity for DNA. Its function is as follows. Transcription factor. Directly controls the expression of cytokine and chemokine genes in a wide variety of different cellular contexts. May control the differentiation, survival and proliferation of lymphoid cells. May also regulate angiogenesis through regulation of expression of genes controlling endothelial cell migration and invasion. The polypeptide is Protein C-ets-1 (Ets1) (Rattus norvegicus (Rat)).